The following is a 223-amino-acid chain: Probable 3-beta-hydroxysteroid-Delta(8),Delta(7)-isomerase (223 aa).

Transmembrane regions (helical) follow at residues 28–48 (IVSI…LLFG), 58–78 (LMCW…YFVF), 115–135 (VEGI…YAIA), and 175–195 (FYYY…PSLI). In terms of domain architecture, EXPERA spans 54 to 196 (LDKLLMCWWT…WWVLIPSLIS (143 aa)).

It belongs to the EBP family.

It is found in the endoplasmic reticulum membrane. It catalyses the reaction lathosterol = 5alpha-cholest-8-en-3beta-ol. The protein operates within steroid biosynthesis; sterol biosynthesis. In terms of biological role, catalyzes the conversion of Delta(8)-sterols to their corresponding Delta(7)-isomers. The polypeptide is Probable 3-beta-hydroxysteroid-Delta(8),Delta(7)-isomerase (Arabidopsis thaliana (Mouse-ear cress)).